Consider the following 455-residue polypeptide: Mitochondrial distribution and morphology protein 10 (455 aa).

Disordered stretches follow at residues 216–249 (WETTNGENGTNTSAPGNASNSRAGVKRVDEEDAV), 278–311 (IRFSTMPDATPPSAQIPPPSPFTPDPTTSGPSPA), and 377–399 (PRSSTDSGEEGAEKPSYPSPLGE). The span at 217–227 (ETTNGENGTNT) shows a compositional bias: low complexity. Residues 228–237 (SAPGNASNSR) show a composition bias toward polar residues. Positions 291–301 (AQIPPPSPFTP) are enriched in pro residues.

Belongs to the MDM10 family. In terms of assembly, component of the ER-mitochondria encounter structure (ERMES) or MDM complex, composed of MMM1, MDM10, MDM12 and MDM34. Associates with the mitochondrial outer membrane sorting assembly machinery SAM(core) complex.

The protein localises to the mitochondrion outer membrane. Its function is as follows. Component of the ERMES/MDM complex, which serves as a molecular tether to connect the endoplasmic reticulum and mitochondria. Components of this complex are involved in the control of mitochondrial shape and protein biogenesis and may function in phospholipid exchange. MDM10 is involved in the late assembly steps of the general translocase of the mitochondrial outer membrane (TOM complex). Functions in the TOM40-specific route of the assembly of outer membrane beta-barrel proteins, including the association of TOM40 with the receptor TOM22 and small TOM proteins. Can associate with the SAM(core) complex as well as the MDM12-MMM1 complex, both involved in late steps of the major beta-barrel assembly pathway, that is responsible for biogenesis of all outer membrane beta-barrel proteins. May act as a switch that shuttles between both complexes and channels precursor proteins into the TOM40-specific pathway. Plays a role in mitochondrial morphology and in the inheritance of mitochondria. This Coprinopsis cinerea (strain Okayama-7 / 130 / ATCC MYA-4618 / FGSC 9003) (Inky cap fungus) protein is Mitochondrial distribution and morphology protein 10.